The primary structure comprises 121 residues: Large ribosomal subunit protein uL22 (121 aa).

Belongs to the universal ribosomal protein uL22 family. As to quaternary structure, part of the 50S ribosomal subunit.

Its function is as follows. This protein binds specifically to 23S rRNA; its binding is stimulated by other ribosomal proteins, e.g. L4, L17, and L20. It is important during the early stages of 50S assembly. It makes multiple contacts with different domains of the 23S rRNA in the assembled 50S subunit and ribosome. In terms of biological role, the globular domain of the protein is located near the polypeptide exit tunnel on the outside of the subunit, while an extended beta-hairpin is found that lines the wall of the exit tunnel in the center of the 70S ribosome. The polypeptide is Large ribosomal subunit protein uL22 (Parasynechococcus marenigrum (strain WH8102)).